We begin with the raw amino-acid sequence, 660 residues long: Long chain acyl-CoA synthetase 1 (660 aa).

225 to 236 lines the ATP pocket; the sequence is IMYTSGTSGDPK. The fatty acid-binding stretch occupies residues 492–516; that stretch reads DGWFHTGDIGEILPNGVLKIIDRKK.

This sequence belongs to the ATP-dependent AMP-binding enzyme family. Requires Mg(2+) as cofactor. Epidermal-specific expression along the entire stem. In cauline leaves, was expressed over the entire leaf surface, most strongly in trichomes and guard cells, but not in mesophyll cells. In flowers, the expression was detected in the stigma and filaments of the stamens, and in the carpel was expressed specifically in ovaries. In roots, was expressed in primary and lateral roots, but not in the root tips.

The protein localises to the endoplasmic reticulum. The catalysed reaction is a long-chain fatty acid + ATP + CoA = a long-chain fatty acyl-CoA + AMP + diphosphate. It participates in lipid metabolism; fatty acid metabolism. Functionally, activation of long-chain fatty acids for both synthesis of cellular lipids, and degradation via beta-oxidation. Acts in both the wax and cutin pathways. Preferentially uses palmitate, palmitoleate, linoleate and eicosenoate. Seems to have a specific activity against very long-chain fatty acid (VLCFA) class with acids longer than 24 carbons (C(24)). The protein is Long chain acyl-CoA synthetase 1 (LACS1) of Arabidopsis thaliana (Mouse-ear cress).